We begin with the raw amino-acid sequence, 317 residues long: Zinc finger protein 771 (317 aa).

Residues 1–17 (MPGEQQAEEEEEEEMQE) are compositionally biased toward acidic residues. A disordered region spans residues 1–63 (MPGEQQAEEE…APSADPARPH (63 aa)). K33 participates in a covalent cross-link: Glycyl lysine isopeptide (Lys-Gly) (interchain with G-Cter in SUMO2). Residues 33–49 (KYEVVKLKIPMDNKEVP) are compositionally biased toward basic and acidic residues. 8 consecutive C2H2-type zinc fingers follow at residues 63–85 (HACP…ARTH), 91–113 (FGCT…GRTH), 119–141 (YECP…RRRH), 147–169 (YACA…LRVH), 175–197 (YACP…RRTH), 203–225 (YACA…RRVH), 231–253 (HRCA…ARTH), and 259–281 (YPCA…RRAH).

It belongs to the krueppel C2H2-type zinc-finger protein family.

It localises to the nucleus. May be involved in transcriptional regulation. This Homo sapiens (Human) protein is Zinc finger protein 771 (ZNF771).